Here is a 270-residue protein sequence, read N- to C-terminus: Tetracenomycin polyketide synthesis O-methyltransferase TcmP (270 aa).

The protein operates within antibiotic biosynthesis; tetracenomycin C biosynthesis. Functionally, O-methyltransferase that catalyzes the methylation of the C-9 carboxy group of tetracenomycin E (TCM E) to yield TCM A2. Catalyzes as well the following side reactions: methylation of 8-O-methyl-TCM D3 to 9-carboxymethyl-8-O-methyl-TCM D3; and of TCM B3 to 9-carboxymethyl-TCM B3. This Streptomyces glaucescens protein is Tetracenomycin polyketide synthesis O-methyltransferase TcmP (tcmP).